An 807-amino-acid polypeptide reads, in one-letter code: Leucine-rich repeat-containing protein 41 (807 aa).

Positions 45-54 (ALFELCGRAV) are interaction with Elongin BC complex. Ser-155, Ser-276, and Ser-326 each carry phosphoserine. 3 disordered regions span residues 269-290 (ASRGRAPSRDEGSLLLGSRRPR), 304-335 (TRRKSEVKQMPRAVPPTRVTRRSTQESLAIGG), and 349-403 (ASGT…GSGA). Thr-327 carries the post-translational modification Phosphothreonine. Positions 352 to 381 (TKQPSAPAAASASSSTSSKRAPASSASQPK) are enriched in low complexity. At Ser-368 the chain carries Phosphoserine. Over residues 382–396 (PLKRFKRAAGKKGPR) the composition is skewed to basic residues. 7 LRR repeats span residues 482-502 (WVSLESLTLSYNGLGSNIFRL), 513-525 (AGCRLRALHLSDL), 526-550 (FSPLPILELTRAIVRALPLLRVLSI), 608-632 (SGSLQQLSLDSATFASPQDFGLVLQ), 638-661 (NLSLKRLSFHDMNLADCQSEVLFL), 696-723 (NSTLKGLRLPGNRLGNAGLLALADVFSE), and 726-747 (SSSLCQLDISSNCIKPDGLLEF).

Part of an E3 ubiquitin-protein ligase complex with Elongin BC (ELOB and ELOC), RBX1 and CUL5. Component of a probable ECS(LRRC41) complex which contains CUL5, RNF7/RBX2, Elongin BC and LRRC41. Interacts with CUL5, RNF7, ELOB and ELOC.

Its pathway is protein modification; protein ubiquitination. Its function is as follows. Probable substrate recognition component of an ECS (Elongin BC-CUL2/5-SOCS-box protein) E3 ubiquitin ligase complex which mediates the ubiquitination and subsequent proteasomal degradation of target proteins. This Mus musculus (Mouse) protein is Leucine-rich repeat-containing protein 41 (Lrrc41).